Here is a 432-residue protein sequence, read N- to C-terminus: MSAEGQEELLDYSDSEEIAVPSNAPEAGADGADKDADKKGSYVGIHATGFRDFLLKPELLRAIGDCGFEHPSEVQQVCIPQSILGTDVLCQAKSGLGKTAVFVLSTLQQLDPVPGEITTLVICHTRELAYQIRNEYARFSKYMPDVKTEVFYGGIPIAKDIEKLKNKDTCPHIVVATPGRLHALVEEKAIRLNNVKSFVIDECDKVLEAIDMRRDVQDIFRNTPHQKQVMMFSATLSQEIRPVCKKFMQNPLEIYVDDEAKLTLHGLQQYYLKLDEKEKNRKLADLLDSLEFNQVIIFVKSTSRANELNKLLVASNFPSIAVHSAMPQEERIARYKSFKEFNKRICVSTDVFGRGIDIERINLAINYDLPNEADQYLHRVGRAGRFGTKGLAISFVGSKEDEEVLEKIQSRFDVKITEFPEEGVDSSTYMNT.

Positions 1–17 (MSAEGQEELLDYSDSEE) are enriched in acidic residues. The disordered stretch occupies residues 1-35 (MSAEGQEELLDYSDSEEIAVPSNAPEAGADGADKD). Positions 48-76 (TGFRDFLLKPELLRAIGDCGFEHPSEVQQ) match the Q motif motif. Residues 79–254 (IPQSILGTDV…KKFMQNPLEI (176 aa)) enclose the Helicase ATP-binding domain. Position 92-99 (92-99 (AKSGLGKT)) interacts with ATP. A DEAD box motif is present at residues 201–204 (DECD). The region spanning 266–427 (GLQQYYLKLD…EFPEEGVDSS (162 aa)) is the Helicase C-terminal domain.

It belongs to the DEAD box helicase family. DECD subfamily.

It is found in the nucleus. It carries out the reaction ATP + H2O = ADP + phosphate + H(+). Its function is as follows. ATP-binding RNA helicase involved in transcription elongation and required for the export of mRNA out of the nucleus. SUB2 also plays a role in pre-mRNA splicing and spliceosome assembly. May be involved in rDNA and telomeric silencing, and maintenance of genome integrity. The polypeptide is ATP-dependent RNA helicase SUB2 (SUB2) (Meyerozyma guilliermondii (strain ATCC 6260 / CBS 566 / DSM 6381 / JCM 1539 / NBRC 10279 / NRRL Y-324) (Yeast)).